The following is a 178-amino-acid chain: Fatty-acid and retinol-binding protein 1 (178 aa).

The first 16 residues, 1-16 (MYHRLILLALIGTTMA), serve as a signal peptide directing secretion. Coiled coils occupy residues 67-89 (DAAL…ELRN) and 130-153 (KQAA…ELKV).

The protein belongs to the fatty-acid and retinol-binding protein (FARBP) family. Not glycosylated.

The protein resides in the secreted. In terms of biological role, binds retinol and different fatty acids. The sequence is that of Fatty-acid and retinol-binding protein 1 from Wuchereria bancrofti.